Reading from the N-terminus, the 345-residue chain is Uroporphyrinogen decarboxylase (345 aa).

Substrate is bound by residues 27-31, Asp-77, Tyr-152, Ser-207, and His-323; that span reads RQAGR.

The protein belongs to the uroporphyrinogen decarboxylase family. In terms of assembly, homodimer.

It localises to the cytoplasm. The enzyme catalyses uroporphyrinogen III + 4 H(+) = coproporphyrinogen III + 4 CO2. It functions in the pathway porphyrin-containing compound metabolism; protoporphyrin-IX biosynthesis; coproporphyrinogen-III from 5-aminolevulinate: step 4/4. Its function is as follows. Catalyzes the decarboxylation of four acetate groups of uroporphyrinogen-III to yield coproporphyrinogen-III. This chain is Uroporphyrinogen decarboxylase, found in Maricaulis maris (strain MCS10) (Caulobacter maris).